The following is a 241-amino-acid chain: 3-oxoacyl-[acyl-carrier-protein] reductase FabG (241 aa).

Residues 13–16, S38, 57–58, and N83 each bind NADP(+); these read GASS and EV. Position 135 (S135) interacts with substrate. The active-site Proton acceptor is the Y148. NADP(+) contacts are provided by residues 148–152 and I181; that span reads YCASK.

It belongs to the short-chain dehydrogenases/reductases (SDR) family. In terms of assembly, homotetramer.

It catalyses the reaction a (3R)-hydroxyacyl-[ACP] + NADP(+) = a 3-oxoacyl-[ACP] + NADPH + H(+). It participates in lipid metabolism; fatty acid biosynthesis. Its function is as follows. Catalyzes the NADPH-dependent reduction of beta-ketoacyl-ACP substrates to beta-hydroxyacyl-ACP products, the first reductive step in the elongation cycle of fatty acid biosynthesis. In Rickettsia prowazekii (strain Madrid E), this protein is 3-oxoacyl-[acyl-carrier-protein] reductase FabG (fabG).